The following is a 233-amino-acid chain: Putative N-acetylmannosamine-6-phosphate 2-epimerase (233 aa).

Belongs to the NanE family.

The catalysed reaction is an N-acyl-D-glucosamine 6-phosphate = an N-acyl-D-mannosamine 6-phosphate. Its pathway is amino-sugar metabolism; N-acetylneuraminate degradation; D-fructose 6-phosphate from N-acetylneuraminate: step 3/5. In terms of biological role, converts N-acetylmannosamine-6-phosphate (ManNAc-6-P) to N-acetylglucosamine-6-phosphate (GlcNAc-6-P). The sequence is that of Putative N-acetylmannosamine-6-phosphate 2-epimerase from Yersinia pestis bv. Antiqua (strain Antiqua).